The chain runs to 336 residues: Cell division protein ZipA (336 aa).

The Periplasmic segment spans residues 1–2; that stretch reads ME. The chain crosses the membrane as a helical span at residues 3–23; sequence LHILFFILAGLLIAVLIGFSL. The Cytoplasmic portion of the chain corresponds to 24–336; it reads WSARREKSRI…SRQSYLARVS (313 aa). The interval 57–76 is disordered; that stretch reads SLNPQSYAQTTGQHGETEAD. Positions 59-70 are enriched in polar residues; it reads NPQSYAQTTGQH.

This sequence belongs to the ZipA family. In terms of assembly, interacts with FtsZ via their C-terminal domains.

The protein resides in the cell inner membrane. Its function is as follows. Essential cell division protein that stabilizes the FtsZ protofilaments by cross-linking them and that serves as a cytoplasmic membrane anchor for the Z ring. Also required for the recruitment to the septal ring of downstream cell division proteins. The sequence is that of Cell division protein ZipA from Actinobacillus pleuropneumoniae serotype 7 (strain AP76).